A 343-amino-acid chain; its full sequence is CRISPR-associated endonuclease Cas1 1 (343 aa).

Glu-166, His-234, and Glu-249 together coordinate Mn(2+).

This sequence belongs to the CRISPR-associated endonuclease Cas1 family. In terms of assembly, homodimer, forms a heterotetramer with a Cas2 homodimer. Requires Mg(2+) as cofactor. Mn(2+) serves as cofactor.

CRISPR (clustered regularly interspaced short palindromic repeat), is an adaptive immune system that provides protection against mobile genetic elements (viruses, transposable elements and conjugative plasmids). CRISPR clusters contain spacers, sequences complementary to antecedent mobile elements, and target invading nucleic acids. CRISPR clusters are transcribed and processed into CRISPR RNA (crRNA). Acts as a dsDNA endonuclease. Involved in the integration of spacer DNA into the CRISPR cassette. The sequence is that of CRISPR-associated endonuclease Cas1 1 from Moorella thermoacetica (strain ATCC 39073 / JCM 9320).